A 456-amino-acid polypeptide reads, in one-letter code: Glycerol-3-phosphate acyltransferase 4 (456 aa).

The first 37 residues, 1-37 (MFLLLPFDSLIVNLLGISLTVLFTLLLVFIIVPAIFG), serve as a signal peptide directing secretion. Transmembrane regions (helical) follow at residues 156–176 (ISLR…CFLL) and 180–200 (IALA…VGYL). Asn247 is a glycosylation site (N-linked (GlcNAc...) asparagine). Residues 248-253 (HTSPID) carry the HXXXXD motif motif. N-linked (GlcNAc...) asparagine glycosylation is found at Asn327, Asn328, and Asn362.

This sequence belongs to the 1-acyl-sn-glycerol-3-phosphate acyltransferase family. In terms of tissue distribution, ubiquitous. High levels in testis. Relatively high level of expression in skeletal muscle and heart. Relatively low level of expression in lung.

The protein resides in the endoplasmic reticulum membrane. It carries out the reaction sn-glycerol 3-phosphate + an acyl-CoA = a 1-acyl-sn-glycero-3-phosphate + CoA. The catalysed reaction is dodecanoyl-CoA + sn-glycerol 3-phosphate = 1-dodecanoyl-sn-glycerol 3-phosphate + CoA. It catalyses the reaction sn-glycerol 3-phosphate + hexadecanoyl-CoA = 1-hexadecanoyl-sn-glycero-3-phosphate + CoA. The enzyme catalyses sn-glycerol 3-phosphate + octadecanoyl-CoA = 1-octadecanoyl-sn-glycero-3-phosphate + CoA. It carries out the reaction sn-glycerol 3-phosphate + (9Z)-octadecenoyl-CoA = 1-(9Z-octadecenoyl)-sn-glycero-3-phosphate + CoA. The catalysed reaction is (9Z,12Z)-octadecadienoyl-CoA + sn-glycerol 3-phosphate = 1-(9Z,12Z)-octadecadienoyl-sn-glycero-3-phosphate + CoA. It participates in phospholipid metabolism; CDP-diacylglycerol biosynthesis; CDP-diacylglycerol from sn-glycerol 3-phosphate: step 1/3. Inhibited by N-ethylmaleimide (NEM). Functionally, converts glycerol-3-phosphate to 1-acyl-sn-glycerol-3-phosphate (lysophosphatidic acid or LPA) by incorporating an acyl moiety at the sn-1 position of the glycerol backbone. Active against both saturated and unsaturated long-chain fatty acyl-CoAs. Protects cells against lipotoxicity. This chain is Glycerol-3-phosphate acyltransferase 4, found in Homo sapiens (Human).